We begin with the raw amino-acid sequence, 114 residues long: Flagellar hook-basal body complex protein FliE (114 aa).

The protein belongs to the FliE family.

Its subcellular location is the bacterial flagellum basal body. This Burkholderia vietnamiensis (strain G4 / LMG 22486) (Burkholderia cepacia (strain R1808)) protein is Flagellar hook-basal body complex protein FliE.